We begin with the raw amino-acid sequence, 110 residues long: UPF0339 protein YegP (110 aa).

Repeat copies occupy residues 10–58 (SSDN…RYEK) and 61–109 (ASNG…VKDN).

It belongs to the UPF0339 family. Duplicated subfamily.

This Escherichia coli O6:H1 (strain CFT073 / ATCC 700928 / UPEC) protein is UPF0339 protein YegP (yegP).